Reading from the N-terminus, the 63-residue chain is Large ribosomal subunit protein uL29 (63 aa).

The protein belongs to the universal ribosomal protein uL29 family.

The protein is Large ribosomal subunit protein uL29 of Serratia proteamaculans (strain 568).